We begin with the raw amino-acid sequence, 167 residues long: Small ribosomal subunit protein uS9 (167 aa).

Residues 1 to 41 (MNTEAVAPDVAEEEVLTSYTSESSASADDAPKKERPALTVS) are disordered. The span at 17 to 26 (TSYTSESSAS) shows a compositional bias: polar residues.

Belongs to the universal ribosomal protein uS9 family.

This Renibacterium salmoninarum (strain ATCC 33209 / DSM 20767 / JCM 11484 / NBRC 15589 / NCIMB 2235) protein is Small ribosomal subunit protein uS9.